Consider the following 363-residue polypeptide: Putative F-box protein At4g22170 (363 aa).

Residues 7 to 58 form the F-box domain; sequence PNSWSDLPHDLLNLVFERLSFANFNRARSVCSSWYSASRQSVPKNQIHWLIL.

This Arabidopsis thaliana (Mouse-ear cress) protein is Putative F-box protein At4g22170.